Consider the following 466-residue polypeptide: Probable ribonuclease FAU-1 (466 aa).

Positions 90–152 (GAIYAGTVTD…TDGRPVLDTT (63 aa)) constitute an S1 motif domain.

Belongs to the FAU-1 family.

Functionally, probable RNase involved in rRNA stability through maturation and/or degradation of precursor rRNAs. Binds to RNA in loop regions with AU-rich sequences. The sequence is that of Probable ribonuclease FAU-1 from Haloarcula marismortui (strain ATCC 43049 / DSM 3752 / JCM 8966 / VKM B-1809) (Halobacterium marismortui).